The following is a 383-amino-acid chain: MHC class I polypeptide-related sequence A (383 aa).

The signal sequence occupies residues 1–23 (MGLGPVFLLLAGIFPFAPPGAAA). Residues 24–307 (EPHSLRYNLT…GKVLVLQSHW (284 aa)) are Extracellular-facing. Asn-31 carries an N-linked (GlcNAc...) asparagine glycan. The cysteines at positions 59 and 64 are disulfide-linked. N-linked (GlcNAc...) asparagine glycosylation is present at Asn-79. Residues Cys-119 and Cys-187 are joined by a disulfide bond. Residues 207 to 296 (PMVNVTRSEA…SGNHSTHPVP (90 aa)) form the Ig-like C1-type domain. N-linked (GlcNAc...) asparagine glycosylation is found at Asn-210, Asn-220, and Asn-261. Cys-225 and Cys-282 are disulfide-bonded. Residues 308–328 (QTFHVSAVAAAAIFVIIIFYV) form a helical membrane-spanning segment. The Cytoplasmic segment spans residues 329 to 383 (RCCKKKTSAAEGPELVSLQVLDQHPVGTSDHRDATQLGFQPLMSDLGSTGSTEGA). 2 S-palmitoyl cysteine lipidation sites follow: Cys-330 and Cys-331.

Belongs to the MHC class I family. MIC subfamily. Unlike classical MHC class I molecules, does not form a heterodimer with beta-2-microglobulin. Binds as a monomer to a KLRK1/NKG2D homodimer. KLRK1 forms a complex with HCST/DAP10 in which KLRK1 binds MICA while HCST acts as an adapter molecule which enables signal transduction. Interacts with PDIA6 on the surface of tumor cells, leading to disulfide bond reduction which is required for release of MICA from tumor cells. As to quaternary structure, (Microbial infection) Interacts with human cytomegalovirus/HHV-5 protein UL142. In terms of processing, N-glycosylated. Glycosylation is not essential for interaction with KLRK1/NKG2D but enhances complex formation. Post-translationally, proteolytically cleaved and released from the cell surface of tumor cells which impairs KLRK1/NKG2D expression and T-cell activation. Palmitoylated on cysteine residues in the cytoplasmic tail leading to its association with membrane microdomains enriched in cholesterol. In terms of processing, N-glycosylation is necessary for cell surface expression. Post-translationally, (Microbial infection) Ubiquitinated by human herpesvirus 8 protein K5, leading to degradation. In terms of tissue distribution, widely expressed with the exception of the central nervous system where it is absent. Expressed predominantly in gastric epithelium and also in monocytes, keratinocytes, endothelial cells, fibroblasts and in the outer layer of Hassal's corpuscles within the medulla of normal thymus. In skin, expressed mainly in the keratin layers, basal cells, ducts and follicles. Also expressed in many, but not all, epithelial tumors of lung, breast, kidney, ovary, prostate and colon. In thyomas, overexpressed in cortical and medullar epithelial cells. Tumors expressing MICA display increased levels of gamma delta T-cells.

The protein resides in the cell membrane. It is found in the cytoplasm. Functionally, widely expressed membrane-bound protein which acts as a ligand to stimulate an activating receptor KLRK1/NKG2D, expressed on the surface of essentially all human natural killer (NK), gammadelta T and CD8 alphabeta T-cells. Up-regulated in stressed conditions, such as viral and bacterial infections or DNA damage response, serves as signal of cellular stress, and engagement of KLRK1/NKG2D by MICA triggers NK-cells resulting in a range of immune effector functions, such as cytotoxicity and cytokine production. The polypeptide is MHC class I polypeptide-related sequence A (Homo sapiens (Human)).